A 213-amino-acid chain; its full sequence is UPF0329 protein ECU04_0110 (213 aa).

This sequence belongs to the UPF0329 family.

The protein is UPF0329 protein ECU04_0110 of Encephalitozoon cuniculi (strain GB-M1) (Microsporidian parasite).